We begin with the raw amino-acid sequence, 252 residues long: Small ribosomal subunit protein uS3 (252 aa).

Residues 39-111 (IRKLINNFAK…DVNLNVLEVK (73 aa)) form the KH type-2 domain. The segment at 226–252 (SQSSNNPNRRPRNFKGGNNNHVNAKKN) is disordered.

It belongs to the universal ribosomal protein uS3 family. Part of the 30S ribosomal subunit. Forms a tight complex with proteins S10 and S14.

Its function is as follows. Binds the lower part of the 30S subunit head. Binds mRNA in the 70S ribosome, positioning it for translation. The polypeptide is Small ribosomal subunit protein uS3 (Aster yellows witches'-broom phytoplasma (strain AYWB)).